Consider the following 474-residue polypeptide: Sensor protein CreC (474 aa).

Over 1-6 the chain is Periplasmic; it reads MRIGMR. Residues 7–27 traverse the membrane as a helical segment; it reads LLLGYFLLVAVAAWFVLAIFV. Residues 28-146 lie on the Cytoplasmic side of the membrane; sequence KEVKPGVRRA…LQNPADPESS (119 aa). The helical transmembrane segment at 147 to 167 threads the bilayer; that stretch reads VMYVAAPIMDGSRLIGVLSVG. Over 168–183 the chain is Periplasmic; the sequence is KPNAAMAPVIKRSERR. The helical transmembrane segment at 184 to 204 threads the bilayer; the sequence is ILWASAILLGIALVIGAGMVW. Positions 205 to 255 constitute an HAMP domain; that stretch reads WINRSIARLTRYADSVTDNKPVPLPDLGSSELRKLAQALESMRVKLEGKNY. Topologically, residues 205–474 are cytoplasmic; the sequence is WINRSIARLT…ASLRLHRHFT (270 aa). The 212-residue stretch at 262–473 folds into the Histidine kinase domain; the sequence is ALTHELKSPL…LASLRLHRHF (212 aa). The residue at position 265 (H265) is a Phosphohistidine; by autocatalysis.

Post-translationally, autophosphorylated.

It localises to the cell inner membrane. The enzyme catalyses ATP + protein L-histidine = ADP + protein N-phospho-L-histidine.. Member of the two-component regulatory system CreC/CreB involved in catabolic regulation. CreC may function as a membrane-associated protein kinase that phosphorylates CreB in response to environmental signals. CreC can also phosphorylate PhoB. This Escherichia coli (strain K12) protein is Sensor protein CreC (creC).